The chain runs to 920 residues: Translation initiation factor IF-2 (920 aa).

The interval 33-305 (KSASSTVEAP…RGRKSKRAKR (273 aa)) is disordered. The segment covering 53-86 (SKSAPAPAKSAGNGATAAPATSATPATAAAAAAP) has biased composition (low complexity). Composition is skewed to pro residues over residues 87–159 (APAP…PAPR), 179–193 (PRPQPRPGAPRPGTP), and 201–212 (NMPPRPAGPRPG). Residues 225-291 (PGGRGPGGGG…GAAGAFGRPG (67 aa)) are compositionally biased toward gly residues. Over residues 295-304 (KRGRKSKRAK) the composition is skewed to basic residues. In terms of domain architecture, tr-type G spans 416–588 (IRPPVVTVMG…VLLTADASLD (173 aa)). The interval 425–432 (GHVDHGKT) is G1. Position 425–432 (425–432 (GHVDHGKT)) interacts with GTP. The tract at residues 450-454 (GITQH) is G2. A G3 region spans residues 475–478 (DTPG). Residues 475-479 (DTPGH) and 529-532 (NKID) contribute to the GTP site. Residues 529-532 (NKID) are G4. The tract at residues 565–567 (SAK) is G5.

Belongs to the TRAFAC class translation factor GTPase superfamily. Classic translation factor GTPase family. IF-2 subfamily.

It is found in the cytoplasm. Its function is as follows. One of the essential components for the initiation of protein synthesis. Protects formylmethionyl-tRNA from spontaneous hydrolysis and promotes its binding to the 30S ribosomal subunits. Also involved in the hydrolysis of GTP during the formation of the 70S ribosomal complex. In Mycobacterium sp. (strain JLS), this protein is Translation initiation factor IF-2.